We begin with the raw amino-acid sequence, 642 residues long: Threonine--tRNA ligase (642 aa).

The 61-residue stretch at Met1–Thr61 folds into the TGS domain. The segment at Asp243–Pro534 is catalytic. Zn(2+) is bound by residues Cys334, His385, and His511.

This sequence belongs to the class-II aminoacyl-tRNA synthetase family. In terms of assembly, homodimer. Zn(2+) is required as a cofactor.

It is found in the cytoplasm. The enzyme catalyses tRNA(Thr) + L-threonine + ATP = L-threonyl-tRNA(Thr) + AMP + diphosphate + H(+). Catalyzes the attachment of threonine to tRNA(Thr) in a two-step reaction: L-threonine is first activated by ATP to form Thr-AMP and then transferred to the acceptor end of tRNA(Thr). Also edits incorrectly charged L-seryl-tRNA(Thr). The protein is Threonine--tRNA ligase of Shewanella piezotolerans (strain WP3 / JCM 13877).